We begin with the raw amino-acid sequence, 249 residues long: Elsinochromes biosynthesis cluster protein HP3 (249 aa).

An N-linked (GlcNAc...) asparagine glycan is attached at Asn-106. A helical membrane pass occupies residues 138–158 (VVFAFMLSAWLVWLITVYAFA).

Its subcellular location is the membrane. Functionally, part of the gene cluster that mediates the biosynthesis of elsinochromes, pigments consisting of at least four interconvertible tautomers (A, B, C and D) that have a core phenolic quinone to which various side chains are attached and which play an important role in fungal pathogenesis. The non-reducing polyketide synthase PKS1 was proposed to iteratively catalyze decarboxylation between acetyl-CoA and malonyl-CoA subunits for polyketide chain elongation. The released polyketide undergoes cyclization to form an aromatic ring, and proceeds via serial modification steps to produce the heptaketide back- bone of elsinochrome. As elsinochrome has a symmetrical structure, two identical heptaketides are fused to form a core 1,2-dihydrobenzo-perylene ring structure, which can then be successively modified to produce the various derivatives of elsinochrome. Some of these reactions may be cooperatively carried out, at least in part, by the products of RDT1, OXR1 and PKS1. PRF1, embedded within the elsinochrome cluster possibly functions to stabilize some of the biosynthetic enzymes required for elsinochrome production. As prefoldin is a hexamer containing 2 a and 4 b subunits, additional prefoldin subunits, whose coding genes may not immediately link to the elsinochrome biosynthetic gene cluster, are required to fulfill the chaperone function. In addition, no methyltransferase-coding gene exists within the biosynthetic gene cluster, even though elsinochrome has four methyl groups at positions C3, C7, C8 and C12. Apparently, the identified gene cluster does not contain the entire entourage of genes responsible for elsinochrome biosynthesis. Once elsinochrome is synthesized, it must be exported outside the fungal cells, which is probably accomplished by the ECT1 transporter, to avoid toxicity. The polypeptide is Elsinochromes biosynthesis cluster protein HP3 (Elsinoe fawcettii (Citrus scab fungus)).